Consider the following 100-residue polypeptide: Large ribosomal subunit protein uL23 (100 aa).

It belongs to the universal ribosomal protein uL23 family. Part of the 50S ribosomal subunit. Contacts protein L29, and trigger factor when it is bound to the ribosome.

Its function is as follows. One of the early assembly proteins it binds 23S rRNA. One of the proteins that surrounds the polypeptide exit tunnel on the outside of the ribosome. Forms the main docking site for trigger factor binding to the ribosome. The sequence is that of Large ribosomal subunit protein uL23 from Thermotoga maritima (strain ATCC 43589 / DSM 3109 / JCM 10099 / NBRC 100826 / MSB8).